Consider the following 289-residue polypeptide: MTTPTLDLAIITGLSGAGRSTAAKCLEDLGWFVVDNLPPELLSTMAELGRRSGGAISRIAVVVDVRGRPFFSDLRAAIAALDARGMHPRMLFLEASDDALIRRFEHVRRPHPLQRDERVVDGIGRERILLAELRGEADLVLDTTDLNVHELRSKIDAAFGQPNANRLNATVVSFGYKYGLPLDADLVADCRFLPNPHWVEALRPFTGRDPQVRDYVLAQPGAQDFLDQYSALLRLVGEGYAREGKRYLTLAVGCTGGKHRSVAIAEQLGIRLAAGGVGVRVVHRDLGRE.

13–20 contacts ATP; the sequence is GLSGAGRS. 64–67 contributes to the GTP binding site; sequence DVRG.

Belongs to the RapZ-like family.

Displays ATPase and GTPase activities. The protein is Nucleotide-binding protein Francci3_1634 of Frankia casuarinae (strain DSM 45818 / CECT 9043 / HFP020203 / CcI3).